The chain runs to 414 residues: Schlafen-like protein 1 (414 aa).

A disordered region spans residues 141–203; that stretch reads LHHREQDDSG…ISQNRPSGVR (63 aa). Positions 154-185 are enriched in pro residues; that stretch reads SHSPGPSPGPSPGPSPGFRRPPLPQLADPPPN. 268–275 contributes to the ATP binding site; it reads GVEDSGLV. Positions 373–407 form a coiled coil; that stretch reads RQKWTAELSKLEEKVDVLTLEKEQLQEQLRQRQTL.

Belongs to the Schlafen family. Subgroup I subfamily.

The polypeptide is Schlafen-like protein 1 (Slfnl1) (Rattus norvegicus (Rat)).